The following is a 326-amino-acid chain: Polyprenal reductase (326 aa).

A run of 5 helical transmembrane segments spans residues 26–46, 84–104, 167–187, 212–232, and 256–276; these read MMFGTFIATIVFFGGLMTFVE, HFYTFALFWSWLAFYVLVSTV, INLSHYAVGYVHYFGAVIALL, ILYLGVFFLAWQQQYASNMIL, and LFNLLSSPHMFLEVVMYFCIA.

This sequence belongs to the steroid 5-alpha reductase family. Polyprenal reductase subfamily.

The protein resides in the endoplasmic reticulum membrane. The catalysed reaction is a di-trans,poly-cis-dolichal + NADP(+) = a di-trans,poly-cis-polyprenal + NADPH + H(+). The protein operates within protein modification; protein glycosylation. Functionally, plays a key role in early steps of protein N-linked glycosylation by being involved in the conversion of polyprenol into dolichol. Acts as a polyprenal reductase that mediates the reduction of polyprenal into dolichal in a NADP-dependent mechanism. Dolichols are required for the synthesis of dolichol-linked monosaccharides and the oligosaccharide precursor used for N-glycosylation. The chain is Polyprenal reductase from Drosophila melanogaster (Fruit fly).